A 162-amino-acid polypeptide reads, in one-letter code: Interleukin-2 (162 aa).

The N-terminal stretch at 1–20 (MYKIQLLSCIALTLALVANG) is a signal peptide. The O-linked (GalNAc...) threonine glycan is linked to T23. N-linked (GlcNAc...) asparagine glycosylation occurs at N70. The cysteines at positions 79 and 134 are disulfide-linked.

The protein belongs to the IL-2 family.

Its subcellular location is the secreted. In terms of biological role, cytokine produced by activated CD4-positive helper T-cells and to a lesser extend activated CD8-positive T-cells and natural killer (NK) cells that plays pivotal roles in the immune response and tolerance. Binds to a receptor complex composed of either the high-affinity trimeric IL-2R (IL2RA/CD25, IL2RB/CD122 and IL2RG/CD132) or the low-affinity dimeric IL-2R (IL2RB and IL2RG). Interaction with the receptor leads to oligomerization and conformation changes in the IL-2R subunits resulting in downstream signaling starting with phosphorylation of JAK1 and JAK3. In turn, JAK1 and JAK3 phosphorylate the receptor to form a docking site leading to the phosphorylation of several substrates including STAT5. This process leads to activation of several pathways including STAT, phosphoinositide-3-kinase/PI3K and mitogen-activated protein kinase/MAPK pathways. Functions as a T-cell growth factor and can increase NK-cell cytolytic activity as well. Promotes strong proliferation of activated B-cells and subsequently immunoglobulin production. Plays a pivotal role in regulating the adaptive immune system by controlling the survival and proliferation of regulatory T-cells, which are required for the maintenance of immune tolerance. Moreover, participates in the differentiation and homeostasis of effector T-cell subsets, including Th1, Th2, Th17 as well as memory CD8-positive T-cells. The protein is Interleukin-2 (IL2) of Cervus elaphus (Red deer).